Consider the following 306-residue polypeptide: Palmitoyl-protein thioesterase ABHD10, mitochondrial (306 aa).

Residues 1–52 (MAGVGLAAVPAWVPCRRWGLAAVTFGFHHGLSTLLARKTERAPQWLRACRHK) constitute a mitochondrion transit peptide. The 100-residue stretch at 78-177 (IIFIPGYISN…KVVALVGVAT (100 aa)) folds into the AB hydrolase-1 domain. Active-site charge relay system residues include S152, D249, and H279.

The protein belongs to the AB hydrolase superfamily.

The protein resides in the mitochondrion. The catalysed reaction is S-hexadecanoyl-L-cysteinyl-[protein] + H2O = L-cysteinyl-[protein] + hexadecanoate + H(+). It carries out the reaction mycophenolic acid O-acyl-beta-D-glucuronide + H2O = mycophenolate + D-glucuronate + H(+). With respect to regulation, inhibited by palmostatin-B. Its function is as follows. Acts as an acyl-protein thioesterase that hydrolyzes fatty acids from acylated residues in proteins. Regulates the mitochondrial S-depalmitoylation of the nucleophilic active site residue of peroxiredoxin-5/PRDX5, a key antioxidant protein, therefore modulating mitochondrial antioxidant ability. Also catalyzes the deglucuronidation of mycophenolic acid acyl-glucuronide, an active metabolite of the immunosuppressant drug mycophenolate. This chain is Palmitoyl-protein thioesterase ABHD10, mitochondrial (ABHD10), found in Bos taurus (Bovine).